Reading from the N-terminus, the 1479-residue chain is MGPGRPAPAPWPRHLLRCVLLLGCLHLGRPGAPGDAALPEPNVFLIFSHGLQGCLEAQGGQVRVTPACNTSLPAQRWKWVSRNRLFNLGTMQCLGTGWPGTNTTASLGMYECDREALNLRWHCRTLGDQLSLLLGARTSNISKPGTLERGDQTRSGQWRIYGSEEDLCALPYHEVYTIQGNSHGKPCTIPFKYDNQWFHGCTSTGREDGHLWCATTQDYGKDERWGFCPIKSNDCETFWDKDQLTDSCYQFNFQSTLSWREAWASCEQQGADLLSITEIHEQTYINGLLTGYSSTLWIGLNDLDTSGGWQWSDNSPLKYLNWESDQPDNPSEENCGVIRTESSGGWQNRDCSIALPYVCKKKPNATAEPTPPDRWANVKVECEPSWQPFQGHCYRLQAEKRSWQESKKACLRGGGDLVSIHSMAELEFITKQIKQEVEELWIGLNDLKLQMNFEWSDGSLVSFTHWHPFEPNNFRDSLEDCVTIWGPEGRWNDSPCNQSLPSICKKAGQLSQGAAEEDHGCRKGWTWHSPSCYWLGEDQVTYSEARRLCTDHGSQLVTITNRFEQAFVSSLIYNWEGEYFWTALQDLNSTGSFFWLSGDEVMYTHWNRDQPGYSRGGCVALATGSAMGLWEVKNCTSFRARYICRQSLGTPVTPELPGPDPTPSLTGSCPQGWASDTKLRYCYKVFSSERLQDKKSWVQAQGACQELGAQLLSLASYEEEHFVANMLNKIFGESEPEIHEQHWFWIGLNRRDPRGGQSWRWSDGVGFSYHNFDRSRHDDDDIRGCAVLDLASLQWVAMQCDTQLDWICKIPRGTDVREPDDSPQGRREWLRFQEAEYKFFEHHSTWAQAQRICTWFQAELTSVHSQAELDFLSHNLQKFSRAQEQHWWIGLHTSESDGRFRWTDGSIINFISWAPGKPRPVGKDKKCVYMTASREDWGDQRCLTALPYICKRSNVTKETQPPDLPTTALGGCPSDWIQFLNKCFQVQGQEPQSRVKWSEAQFSCEQQEAQLVTITNPLEQAFITASLPNVTFDLWIGLHASQRDFQWVEQEPLMYANWAPGEPSGPSPAPSGNKPTSCAVVLHSPSAHFTGRWDDRSCTEETHGFICQKGTDPSLSPSPAALPPAPGTELSYLNGTFRLLQKPLRWHDALLLCESRNASLAYVPDPYTQAFLTQAARGLRTPLWIGLAGEEGSRRYSWVSEEPLNYVGWQDGEPQQPGGCTYVDVDGAWRTTSCDTKLQGAVCGVSSGPPPPRRISYHGSCPQGLADSAWIPFREHCYSFHMELLLGHKEARQRCQRAGGAVLSILDEMENVFVWEHLQSYEGQSRGAWLGMNFNPKGGTLVWQDNTAVNYSNWGPPGLGPSMLSHNSCYWIQSNSGLWRPGACTNITMGVVCKLPRAEQSSFSPSALPENPAALVVVLMAVLLLLALLTAALILYRRRQSIERGAFEGARYSRSSSSPTEATEKNILVSDMEMNEQQE.

The signal sequence occupies residues 1 to 30 (MGPGRPAPAPWPRHLLRCVLLLGCLHLGRP). Residues 31–1414 (GAPGDAALPE…PSALPENPAA (1384 aa)) lie on the Extracellular side of the membrane. In terms of domain architecture, Ricin B-type lectin spans 41–167 (PNVFLIFSHG…WRIYGSEEDL (127 aa)). An intrachain disulfide couples Cys-54 to Cys-68. A glycan (N-linked (GlcNAc...) (complex) asparagine) is linked at Asn-69. Cys-93 and Cys-112 are disulfide-bonded. Asn-140 is a glycosylation site (N-linked (GlcNAc...) asparagine). Residues 182–230 (SHGKPCTIPFKYDNQWFHGCTSTGREDGHLWCATTQDYGKDERWGFCPI) form the Fibronectin type-II domain. Cystine bridges form between Cys-187–Cys-213, Cys-201–Cys-228, Cys-266–Cys-359, and Cys-335–Cys-351. Positions 244–360 (LTDSCYQFNF…CSIALPYVCK (117 aa)) constitute a C-type lectin 1 domain. N-linked (GlcNAc...) asparagine glycosylation is present at Asn-364. C-type lectin domains lie at 389–505 (FQGH…SICK), 528–644 (HSPS…RYIC), 678–809 (KLRY…WICK), and 832–951 (FQEA…YICK). Disulfide bonds link Cys-410–Cys-504 and Cys-481–Cys-496. N-linked (GlcNAc...) asparagine glycosylation occurs at Asn-588. Disulfide bonds link Cys-618–Cys-635, Cys-704–Cys-808, Cys-785–Cys-800, Cys-853–Cys-950, and Cys-927–Cys-942. N-linked (GlcNAc...) asparagine glycans are attached at residues Asn-954 and Asn-1029. 3 C-type lectin domains span residues 979–1107 (FLNK…GFIC), 1132–1243 (YLNG…GAVC), and 1273–1393 (FREH…GVVC). Cys-1078 and Cys-1098 form a disulfide bridge. Residue Lys-1142 forms a Glycyl lysine isopeptide (Lys-Gly) (interchain with G-Cter in SUMO1) linkage. The cysteines at positions 1220 and 1234 are disulfide-linked. N-linked (GlcNAc...) asparagine glycosylation is present at Asn-1350. A disulfide bridge links Cys-1369 with Cys-1384. Residues 1415–1435 (LVVVLMAVLLLLALLTAALIL) traverse the membrane as a helical segment. The Cytoplasmic portion of the chain corresponds to 1436 to 1479 (YRRRQSIERGAFEGARYSRSSSSPTEATEKNILVSDMEMNEQQE). Positions 1450–1479 (ARYSRSSSSPTEATEKNILVSDMEMNEQQE) are disordered.

Interacts with C-terminal region of type I collagen/COL1A1. Interacts directly with PLAUR/UPAR and PLAU/pro-UPA to form a tri-molecular complex. Interacts with collagen V. Post-translationally, N-glycosylated. In terms of tissue distribution, ubiquitous with low expression in brain, placenta, lung, kidney, pancreas, spleen, thymus and colon. Expressed in endothelial cells, fibroblasts and macrophages. Highly expressed in fetal lung and kidney.

The protein localises to the membrane. In terms of biological role, may play a role as endocytotic lectin receptor displaying calcium-dependent lectin activity. Internalizes glycosylated ligands from the extracellular space for release in an endosomal compartment via clathrin-mediated endocytosis. May be involved in plasminogen activation system controlling the extracellular level of PLAUR/PLAU, and thus may regulate protease activity at the cell surface. May contribute to cellular uptake, remodeling and degradation of extracellular collagen matrices. May play a role during cancer progression as well as in other chronic tissue destructive diseases acting on collagen turnover. May participate in remodeling of extracellular matrix cooperating with the matrix metalloproteinases (MMPs). The chain is C-type mannose receptor 2 (MRC2) from Homo sapiens (Human).